The following is a 499-amino-acid chain: Protein singed wings 2 (499 aa).

Residues 1 to 29 (MPSGVFQKRPKAAETISLFCMILIRLSRA) form the signal peptide. LRR repeat units lie at residues 154-175 (ELHT…TFKR) and 178-199 (PLKV…LLLP). Residues 210-265 (NPWNCTRNFKWLLLQPEKGRLVVDRDELICTDRKYKERQMLMVMHYKLELKRQCQS) form the LRRCT 1 domain. LRR repeat units lie at residues 307 to 328 (NTTT…RDNP), 332 to 353 (HVVD…EDTY), and 357 to 378 (NFRL…ALDN). The region spanning 394–449 (NPWHCTCKFGSRMRELLTKYKDIVRDAWNVSCTYRLDDDQLLAKVLTLSRQEMCNL) is the LRRCT 2 domain.

Its function is as follows. Has a role in the ecdysone induced cascade; probably indirect control of 'late' ecdysone genes. This chain is Protein singed wings 2, found in Drosophila melanogaster (Fruit fly).